Here is a 490-residue protein sequence, read N- to C-terminus: GDP-fucose protein O-fucosyltransferase 2 (490 aa).

The signal sequence occupies residues 1–25; the sequence is MRGSWPRLGFPALLLLLHLLTGSDA. N-linked (GlcNAc...) asparagine glycans are attached at residues asparagine 29 and asparagine 79. 81–85 contributes to the GDP-beta-L-fucose binding site; it reads SEGFN. Glutamate 82 functions as the Proton acceptor in the catalytic mechanism. A disulfide bridge links cysteine 203 with cysteine 226. 336-338 lines the GDP-beta-L-fucose pocket; sequence HLR. Asparagine 368 carries N-linked (GlcNAc...) asparagine glycosylation. GDP-beta-L-fucose contacts are provided by residues aspartate 418 and 435–436; that span reads TF. Cysteine 459 and cysteine 466 are disulfide-bonded.

This sequence belongs to the glycosyltransferase 68 family.

Its subcellular location is the endoplasmic reticulum. It is found in the golgi apparatus. It catalyses the reaction L-seryl-[protein] + GDP-beta-L-fucose = 3-O-(alpha-L-fucosyl)-L-seryl-[protein] + GDP + H(+). The catalysed reaction is L-threonyl-[protein] + GDP-beta-L-fucose = 3-O-(alpha-L-fucosyl)-L-threonyl-[protein] + GDP + H(+). It participates in protein modification; protein glycosylation. Does not require divalent metal ions for optimal activity. Catalyzes the reaction that attaches fucose through an O-glycosidic linkage to a conserved serine or threonine residue in the consensus sequence C1-X-X-S/T-C2 of thrombospondin type I repeats (TSRs) where C1 and C2 are the first and second cysteines of the repeat, respectively. O-fucosylates members of several protein families including the ADAMTS, the thrombospondin (TSP) and spondin families. The chain is GDP-fucose protein O-fucosyltransferase 2 from Drosophila melanogaster (Fruit fly).